A 29-amino-acid polypeptide reads, in one-letter code: Cyclotide mden-C (29 aa).

A cross-link (cyclopeptide (Gly-Asn)) is located at residues 1–29; the sequence is GKPICGETCFKGKCYTPGCTCSYPVCKKN. 3 disulfide bridges follow: C5-C19, C9-C21, and C14-C26.

Belongs to the cyclotide family. Post-translationally, this is a cyclic peptide.

In terms of biological role, probably participates in a plant defense mechanism. This is Cyclotide mden-C from Melicytus dentatus (Tree violet).